Here is a 56-residue protein sequence, read N- to C-terminus: Large ribosomal subunit protein bL32c (56 aa).

Basic residues predominate over residues 1–20 (MAAPKKRTSKSRKNMRKSTW). The disordered stretch occupies residues 1-28 (MAAPKKRTSKSRKNMRKSTWKRQAATQA).

The protein belongs to the bacterial ribosomal protein bL32 family.

The protein resides in the plastid. The protein localises to the chloroplast. This Mesostigma viride (Green alga) protein is Large ribosomal subunit protein bL32c (rpl32).